A 641-amino-acid polypeptide reads, in one-letter code: Probable serine protease FE772_23065 (641 aa).

Residues 532–552 (WVELIAILAAAGWIRVMLIGL) traverse the membrane as a helical segment.

Belongs to the peptidase S1 family.

It is found in the cell inner membrane. Functionally, possibly a dedicated protease for substrate gasdermin bGSDM; cleaves the bGSDM precursor, releasing the pore-forming moiety, which integrates into the membrane and triggers cell death. Involved in defense against bacteriophages. When this probable 4 gene operon (bGSDM-FE772_23060-FE772_23065-FE772_23070) is inserted into E.coli it provides nearly 100-fold protection against phages T5 and T6 and about 8-fold against phage T4. The operon without bGSDM no longer protects against phage. The chain is Probable serine protease FE772_23065 from Lysobacter enzymogenes.